The sequence spans 129 residues: M-zodatoxin-Lt8h (129 aa).

The N-terminal stretch at 1-20 is a signal peptide; sequence MKYFVVALALVAAFACIAES. Residues 21-60 constitute a propeptide that is removed on maturation; the sequence is KPAESEHELAEVEEENELADLEDAVWLEDLADLSDLEETR.

The protein belongs to the cationic peptide 06 (cytoinsectotoxin) family. As to expression, expressed by the venom gland.

It localises to the secreted. Functionally, insecticidal, cytolytic and antimicrobial peptide. Has insecticidal activity against the flesh fly S.carnaria. Has antibacterial activity against the Gram-negative bacteria E.coli. Forms voltage-dependent, ion-permeable channels in membranes. At high concentration causes cell membrane lysis. This chain is M-zodatoxin-Lt8h (cit 1-11), found in Lachesana tarabaevi (Spider).